The chain runs to 170 residues: Double homeobox protein 1 (170 aa).

2 consecutive DNA-binding regions (homeobox) follow at residues 19-78 (GRRM…LRQH) and 94-153 (GRRK…RGQS). The interval 75–100 (LRQHRRQSRPWPGRRDPQKGRRKRTA) is disordered.

The protein belongs to the paired homeobox family. Expressed in rhabdomyosarcoma TE671 cells as well as in several other normal and cancer cells.

Its subcellular location is the nucleus. Its function is as follows. Probable transcription activator. Binds the P5 DNA element sequence 5'-GATCTGAGTCTAATTGAGAATTACTGTAC-3'. The chain is Double homeobox protein 1 (DUX1) from Homo sapiens (Human).